The primary structure comprises 73 residues: Large ribosomal subunit protein bL31 (73 aa).

Belongs to the bacterial ribosomal protein bL31 family. Type A subfamily. As to quaternary structure, part of the 50S ribosomal subunit.

Binds the 23S rRNA. This chain is Large ribosomal subunit protein bL31, found in Dinoroseobacter shibae (strain DSM 16493 / NCIMB 14021 / DFL 12).